The primary structure comprises 624 residues: Protein POLLEN DEFECTIVE IN GUIDANCE 1 (624 aa).

The disordered stretch occupies residues 20–63 (SFENDDTSIRRSSSDPITGNVASESPRDYGKRKRSKKKKKKVNQ). The segment covering 33–42 (SDPITGNVAS) has biased composition (polar residues). The segment covering 49–61 (GKRKRSKKKKKKV) has biased composition (basic residues). 6 consecutive transmembrane segments (helical) span residues 263-283 (VLID…LTVM), 305-325 (ASEL…ILLG), 391-411 (FVSD…ILLA), 413-433 (AITL…LLVS), 545-565 (LTFV…PVYA), and 578-598 (LWMV…KVLI).

Belongs to the TAPT1 family. Interacts with CRT3, but not with CRT1 or CNX. Expressed in inflorescences, siliques, roots and shoots. Expressed in early embryo, endosperm, mature pollen and pollen tubes, synergide cells and weakly in antipodal cells.

The protein localises to the membrane. The protein resides in the endoplasmic reticulum lumen. In terms of biological role, probable component of the calreticulin 3 (CRT3) complex, acting probably as a co-chaperone involved in protein retention in the endoplasmic reticulum lumen. Required for micropylar pollen tube guidance. Plays an essential role in cell plate orientation or positioning in early embryo patterning. The polypeptide is Protein POLLEN DEFECTIVE IN GUIDANCE 1 (POD1) (Arabidopsis thaliana (Mouse-ear cress)).